The primary structure comprises 515 residues: Histone-lysine N-methyltransferase SET5 (515 aa).

The SET domain occupies 114-386 (SKVEIRECEE…KDEELVTTYV (273 aa)). The span at 452-462 (ALQRSNGGSSS) shows a compositional bias: polar residues. The tract at residues 452–476 (ALQRSNGGSSSDLRRKSSIRNRKPD) is disordered.

The protein belongs to the class V-like SAM-binding methyltransferase superfamily. Histone-lysine methyltransferase family. SET5 subfamily.

It localises to the nucleus. The protein resides in the chromosome. Its subcellular location is the cytoplasm. It carries out the reaction L-lysyl-[histone] + S-adenosyl-L-methionine = N(6)-methyl-L-lysyl-[histone] + S-adenosyl-L-homocysteine + H(+). Histone methyltransferase that monomethylates 'Lys-5', 'Lys-8' and 'Lys-12' of histone H4 (H4K5me1, H4K8me1 and H4K12me1, respectively), thereby controlling gene expression and remodeling chromatin structures. This chain is Histone-lysine N-methyltransferase SET5 (SET5), found in Candida glabrata (strain ATCC 2001 / BCRC 20586 / JCM 3761 / NBRC 0622 / NRRL Y-65 / CBS 138) (Yeast).